The sequence spans 270 residues: HTH-type transcriptional repressor DrrR1 (270 aa).

The segment covering 1-11 (MESGTSRTSDT) has biased composition (low complexity). Positions 1-28 (MESGTSRTSDTGGTGRAGSTETSGSGDI) are disordered. The 61-residue stretch at 49–109 (TLTLDRVVEA…LMLDRVQRPS (61 aa)) folds into the HTH tetR-type domain. Positions 72 to 91 (SMRRVAAELGTGTMSLYRYV) form a DNA-binding region, H-T-H motif.

It localises to the cytoplasm. Its activity is regulated as follows. Daunorubicin and doxorubicin can induce dissociation of DrrR1 from its DNA complex. Ampicillin cannot release DrrR1 from the DNA complex at the same concentrations. Its function is as follows. Transcriptional regulator that modulates the expression of the drrA2-drrB2 genes, which encode an ABC transporter involved in daunorubicin efflux, in response to intracellular daunorubicin/doxorubicin accumulation. In the absence of daunorubicin or doxorubicin, binds directly to the drrA2-drrB2 promoter region and negatively regulates expression of the genes. In the presence of daunorubicin or doxorubicin, DrrR1 dissociates from DNA, leading to the transcription of the genes. The polypeptide is HTH-type transcriptional repressor DrrR1 (Streptomyces coeruleorubidus).